Consider the following 77-residue polypeptide: Sec-independent protein translocase protein TatA (77 aa).

Residues 1–21 form a helical membrane-spanning segment; the sequence is MGSFSIWHWLVVGILVLLLFG. The tract at residues 41-77 is disordered; the sequence is KGMSEDDAPTPAPKQIDAQRAPDLSATPTPTAETENR. Residues 66-77 are compositionally biased toward polar residues; the sequence is ATPTPTAETENR.

This sequence belongs to the TatA/E family. As to quaternary structure, the Tat system comprises two distinct complexes: a TatABC complex, containing multiple copies of TatA, TatB and TatC subunits, and a separate TatA complex, containing only TatA subunits. Substrates initially bind to the TatABC complex, which probably triggers association of the separate TatA complex to form the active translocon.

It is found in the cell inner membrane. Functionally, part of the twin-arginine translocation (Tat) system that transports large folded proteins containing a characteristic twin-arginine motif in their signal peptide across membranes. TatA could form the protein-conducting channel of the Tat system. This is Sec-independent protein translocase protein TatA from Sphingopyxis alaskensis (strain DSM 13593 / LMG 18877 / RB2256) (Sphingomonas alaskensis).